A 515-amino-acid polypeptide reads, in one-letter code: Putative ribose/galactose/methyl galactoside import ATP-binding protein (515 aa).

ABC transporter domains are found at residues 26–262 (LEVA…VGRE) and 272–511 (VALG…KIMD). ATP is bound at residue 58–65 (GENGAGKS).

It belongs to the ABC transporter superfamily. Carbohydrate importer 2 (CUT2) (TC 3.A.1.2) family.

It localises to the cell inner membrane. The catalysed reaction is D-ribose(out) + ATP + H2O = D-ribose(in) + ADP + phosphate + H(+). It carries out the reaction D-galactose(out) + ATP + H2O = D-galactose(in) + ADP + phosphate + H(+). Its function is as follows. Part of an ABC transporter complex involved in carbohydrate import. Could be involved in ribose, galactose and/or methyl galactoside import. Responsible for energy coupling to the transport system. The chain is Putative ribose/galactose/methyl galactoside import ATP-binding protein from Hahella chejuensis (strain KCTC 2396).